The sequence spans 297 residues: Rhomboid-type serine protease 2 (297 aa).

6 helical membrane-spanning segments follow: residues 14–34, 60–80, 98–118, 120–140, 155–175, and 179–199; these read IQHPPALSLGLPIFLTVIFLL, ISFYPLVHATWFHLLLNLVAL, IVLNILAVVTAIPWCLLSIGF, PDEAVLGSSAWIFSFMGYWAI, LVVPTWLLPIIYLVVIAIVIP, and FIGHLLGLIAGWMMALGYLDV. The Nucleophile role is filled by Ser-128. His-182 is a catalytic residue. Positions 268-297 are disordered; the sequence is DLEAGTRSRGNSSVDPTTSFPGTGQTLGTQ. A compositionally biased stretch (polar residues) spans 275–297; it reads SRGNSSVDPTTSFPGTGQTLGTQ.

Belongs to the peptidase S54 family.

Its subcellular location is the golgi apparatus membrane. It localises to the golgi apparatus. The protein localises to the cis-Golgi network membrane. The enzyme catalyses Cleaves type-1 transmembrane domains using a catalytic dyad composed of serine and histidine that are contributed by different transmembrane domains.. Functionally, probable rhomboid-type serine protease that catalyzes intramembrane proteolysis. The polypeptide is Rhomboid-type serine protease 2 (RBD2) (Yarrowia lipolytica (strain CLIB 122 / E 150) (Yeast)).